Reading from the N-terminus, the 272-residue chain is MARLAAFDMDGTLLMPDHHLGRETIATLARLRERDITLTFATGRHVLEMRHILGTLSLDAYLITGNGTRIHSLEGDVLHRQDLDPQVADTVMHHAWDTRASMHVFNDNGWFTGQEIPALLQAHVYSGFRYQVIDIKSIPAHQVTKICFCGDHDDLIRLRIQLNEALEERAHLCFSAVDCLEVLPLGCNKGSALAVLSNHLGLSLADCMAFGDAMNDREMLGSVGRGLIMGNAMPQLIAALPHLSVIGHCGNQAVSHFLTHWLDNPHLPYSPE.

Catalysis depends on D8, which acts as the Nucleophile. Positions 8, 10, and 212 each coordinate Mg(2+).

It belongs to the HAD-like hydrolase superfamily. Cof family. Mg(2+) serves as cofactor.

The catalysed reaction is 4-amino-2-methyl-5-(diphosphooxymethyl)pyrimidine + H2O = 4-amino-2-methyl-5-(phosphooxymethyl)pyrimidine + phosphate + H(+). In terms of biological role, catalyzes the hydrolysis of 4-amino-2-methyl-5-hydroxymethylpyrimidine pyrophosphate (HMP-PP) to 4-amino-2-methyl-5-hydroxymethylpyrimidine phosphate (HMP-P). The polypeptide is HMP-PP phosphatase (Salmonella enteritidis PT4 (strain P125109)).